The following is a 424-amino-acid chain: STAM-binding protein (424 aa).

The tract at residues 1–127 (MSDHADVSLP…YEQYKERKKK (127 aa)) is interaction with CHMP3. A phosphoserine mark is found at Ser-2 and Ser-48. Residues 227 to 231 (PAKPP) are interaction with STAM. Phosphoserine is present on Ser-243. An MPN domain is found at 257–388 (IVVPRNLCSE…LTDYGLQEIS (132 aa)). Zn(2+) is bound by residues His-335, His-337, Asp-348, His-350, Cys-390, His-396, and His-398. The short motif at 335–348 (HTHPTQTAFLSSVD) is the JAMM motif element.

It belongs to the peptidase M67C family. Interacts with STAM. Interacts with SMAD6 and SMAD7. Interacts with CHMP3; the interaction appears to relieve the autoinhibition of CHMP3. Interacts with SMURF2 and RNF11; this interaction promotes ubiquitination. Zn(2+) is required as a cofactor. Post-translationally, phosphorylated after BMP type I receptor activation. Ubiquitinated by SMURF2 in the presence of RNF11.

The protein resides in the nucleus. It localises to the membrane. Its subcellular location is the cytoplasm. It is found in the early endosome. With respect to regulation, inhibited by N-ethylmaleimide. Zinc metalloprotease that specifically cleaves 'Lys-63'-linked polyubiquitin chains. Does not cleave 'Lys-48'-linked polyubiquitin chains. Plays a role in signal transduction for cell growth and MYC induction mediated by IL-2 and GM-CSF. Potentiates BMP (bone morphogenetic protein) signaling by antagonizing the inhibitory action of SMAD6 and SMAD7. Has a key role in regulation of cell surface receptor-mediated endocytosis and ubiquitin-dependent sorting of receptors to lysosomes. Endosomal localization of STAMBP is required for efficient EGFR degradation but not for its internalization. Involved in the negative regulation of PI3K-AKT-mTOR and RAS-MAP signaling pathways. The polypeptide is STAM-binding protein (Stambp) (Rattus norvegicus (Rat)).